Reading from the N-terminus, the 120-residue chain is NAD(P)H-quinone oxidoreductase subunit 3 (120 aa).

3 consecutive transmembrane segments (helical) span residues 6–26, 64–84, and 89–109; these read GYDAFLGFLLIAAAVPVLALV, MFALVFVIFDVETVFLYPWAV, and LGLLAFIEALIFIAILLVALA.

It belongs to the complex I subunit 3 family. As to quaternary structure, NDH-1 can be composed of about 15 different subunits; different subcomplexes with different compositions have been identified which probably have different functions.

It localises to the cellular thylakoid membrane. The catalysed reaction is a plastoquinone + NADH + (n+1) H(+)(in) = a plastoquinol + NAD(+) + n H(+)(out). It catalyses the reaction a plastoquinone + NADPH + (n+1) H(+)(in) = a plastoquinol + NADP(+) + n H(+)(out). Functionally, NDH-1 shuttles electrons from an unknown electron donor, via FMN and iron-sulfur (Fe-S) centers, to quinones in the respiratory and/or the photosynthetic chain. The immediate electron acceptor for the enzyme in this species is believed to be plastoquinone. Couples the redox reaction to proton translocation, and thus conserves the redox energy in a proton gradient. Cyanobacterial NDH-1 also plays a role in inorganic carbon-concentration. This Synechococcus sp. (strain CC9902) protein is NAD(P)H-quinone oxidoreductase subunit 3.